Reading from the N-terminus, the 469-residue chain is Ribulose bisphosphate carboxylase large chain (469 aa).

The residue at position 8 (K8) is an N6,N6,N6-trimethyllysine. Substrate is bound by residues N117 and T167. The active-site Proton acceptor is K169. A substrate-binding site is contributed by K171. Residues K195, D197, and E198 each coordinate Mg(2+). K195 is modified (N6-carboxylysine). H288 acts as the Proton acceptor in catalysis. Substrate is bound by residues R289, H321, and S373.

The protein belongs to the RuBisCO large chain family. Type I subfamily. In terms of assembly, heterohexadecamer of 8 large chains and 8 small chains; disulfide-linked. The disulfide link is formed within the large subunit homodimers. The cofactor is Mg(2+). In terms of processing, the disulfide bond which can form in the large chain dimeric partners within the hexadecamer appears to be associated with oxidative stress and protein turnover.

Its subcellular location is the plastid. It is found in the chloroplast. The enzyme catalyses 2 (2R)-3-phosphoglycerate + 2 H(+) = D-ribulose 1,5-bisphosphate + CO2 + H2O. The catalysed reaction is D-ribulose 1,5-bisphosphate + O2 = 2-phosphoglycolate + (2R)-3-phosphoglycerate + 2 H(+). Functionally, ruBisCO catalyzes two reactions: the carboxylation of D-ribulose 1,5-bisphosphate, the primary event in carbon dioxide fixation, as well as the oxidative fragmentation of the pentose substrate in the photorespiration process. Both reactions occur simultaneously and in competition at the same active site. In Persicaria senticosa (Knotweed), this protein is Ribulose bisphosphate carboxylase large chain.